Reading from the N-terminus, the 299-residue chain is Acetylglutamate kinase (299 aa).

Substrate is bound by residues 64-65 (GG), R86, and N197.

The protein belongs to the acetylglutamate kinase family. ArgB subfamily.

The protein localises to the cytoplasm. It catalyses the reaction N-acetyl-L-glutamate + ATP = N-acetyl-L-glutamyl 5-phosphate + ADP. It functions in the pathway amino-acid biosynthesis; L-arginine biosynthesis; N(2)-acetyl-L-ornithine from L-glutamate: step 2/4. In terms of biological role, catalyzes the ATP-dependent phosphorylation of N-acetyl-L-glutamate. In Persephonella marina (strain DSM 14350 / EX-H1), this protein is Acetylglutamate kinase.